The primary structure comprises 344 residues: Ferrochelatase (344 aa).

Residues His-190 and Glu-270 each contribute to the Fe cation site.

This sequence belongs to the ferrochelatase family.

The protein localises to the cytoplasm. The enzyme catalyses heme b + 2 H(+) = protoporphyrin IX + Fe(2+). It functions in the pathway porphyrin-containing compound metabolism; protoheme biosynthesis; protoheme from protoporphyrin-IX: step 1/1. Its function is as follows. Catalyzes the ferrous insertion into protoporphyrin IX. The sequence is that of Ferrochelatase from Rickettsia felis (strain ATCC VR-1525 / URRWXCal2) (Rickettsia azadi).